A 168-amino-acid polypeptide reads, in one-letter code: Mitochondrial inner membrane protein SHH4 (168 aa).

Residues 1 to 23 constitute a mitochondrion transit peptide; it reads MSSTKFLKPLCRIRAFHTSIARS. The Mitochondrial matrix portion of the chain corresponds to 24 to 65; it reads FTIPFLPKIPQKPGGVSGTANDSSYMPPESRAQGSYHWIVER. Residues 66-86 traverse the membrane as a helical segment; it reads GLSLAVLPLIAVPLVTTGPIS. At 87 to 92 the chain is on the mitochondrial intermembrane side; the sequence is TFTDTF. Residues 93-113 form a helical membrane-spanning segment; the sequence is LSLVLLGHCHIGFQSCIIDYI. Cys101 lines the heme pocket. Tyr112 provides a ligand contact to a ubiquinone. At 114 to 120 the chain is on the mitochondrial matrix side; it reads SERVYGK. The chain crosses the membrane as a helical span at residues 121–141; the sequence is VHHYAMYLLSLGSFLSFVGIY. Residues 142-168 are Mitochondrial intermembrane-facing; that stretch reads KLESQEAGLIASLKSLWDNKPVEKKRQ.

It belongs to the CybS family. In terms of assembly, interacts with SDH3.

It is found in the mitochondrion inner membrane. Homolog of SDH4, but seems not to be a stoichiometric subunit of either the succinate dehydrogenase (SDH) complex or the mitochondrial inner membrane translocase TIM22 complex. This chain is Mitochondrial inner membrane protein SHH4, found in Saccharomyces cerevisiae (strain ATCC 204508 / S288c) (Baker's yeast).